A 156-amino-acid chain; its full sequence is Translation initiation factor IF-1, chloroplastic (156 aa).

Residues 1–35 (MAASLTLMTSPPCSRSSKSPSPSPSPSLSCNQQQQ) form a disordered region. The transit peptide at 1-49 (MAASLTLMTSPPCSRSSKSPSPSPSPSLSCNQQQQYKPLLHHQWPPQIS) directs the protein to the chloroplast. The segment covering 10–20 (SPPCSRSSKSP) has biased composition (low complexity). One can recognise an S1-like domain in the interval 72–148 (GGSPSVQEQK…TRGRITYRLR (77 aa)).

The protein belongs to the IF-1 family. As to quaternary structure, component of the 30S ribosomal translation pre-initiation complex which assembles on the 30S ribosome in the order IF-2 and IF-3, IF-1 and N-formylmethionyl-tRNA(fMet); mRNA recruitment can occur at any time during PIC assembly.

It localises to the plastid. The protein resides in the chloroplast. In terms of biological role, one of the essential components for the initiation of protein synthesis. Stabilizes the binding of IF-2 and IF-3 on the 30S subunit to which N-formylmethionyl-tRNA(fMet) subsequently binds. Helps modulate mRNA selection, yielding the 30S pre-initiation complex (PIC). Upon addition of the 50S ribosomal subunit IF-1, IF-2 and IF-3 are released leaving the mature 70S translation initiation complex. This Mesembryanthemum crystallinum (Common ice plant) protein is Translation initiation factor IF-1, chloroplastic (infA).